The primary structure comprises 432 residues: Neuronal pentraxin-1 (432 aa).

The first 22 residues, 1–22, serve as a signal peptide directing secretion; the sequence is MLAGRAARTCALLALCLLGSRA. The tract at residues 90–128 is disordered; that stretch reads ESQSTLDAGPGEARSGGGRKQPGSGKNTMGDLSRTPASE. 2 N-linked (GlcNAc...) asparagine glycosylation sites follow: N154 and N193. Residues 226–428 enclose the Pentraxin (PTX) domain; sequence DKFQLTFPLR…GATKWTFEAC (203 aa). Residues C256 and C316 are joined by a disulfide bond. Residues N280, E358, Q359, D360, and Q370 each contribute to the Ca(2+) site.

As to quaternary structure, homooligomer or heterooligomer (probably pentamer) with neuronal pentraxin receptor (NPTXR). Ca(2+) serves as cofactor. In terms of processing, glycosylated. As to expression, cerebellum, hippocampus and cerebral cortex.

The protein localises to the secreted. It localises to the cytoplasmic vesicle. The protein resides in the secretory vesicle. Its subcellular location is the endoplasmic reticulum. In terms of biological role, may be involved in mediating uptake of synaptic material during synapse remodeling or in mediating the synaptic clustering of AMPA glutamate receptors at a subset of excitatory synapses. In Rattus norvegicus (Rat), this protein is Neuronal pentraxin-1 (Nptx1).